We begin with the raw amino-acid sequence, 561 residues long: Putative cysteine ligase BshC (561 aa).

Positions 472–517 (LAQSVEKVMQSTLNQVENLKSKTIKAEKQRHNDLIAQIEKSRDNLL) form a coiled coil.

The protein belongs to the BshC family.

The sequence is that of Putative cysteine ligase BshC from Chloroherpeton thalassium (strain ATCC 35110 / GB-78).